Consider the following 195-residue polypeptide: Rho-related protein racB (195 aa).

Residue 10–17 (GDGAVGKT) participates in GTP binding. Positions 32-40 (YVPTVFDNY) match the Effector region motif. GTP-binding positions include 57–61 (DTAGQ) and 115–118 (TKCD). The residue at position 192 (Cys192) is a Cysteine methyl ester. Cys192 carries the S-geranylgeranyl cysteine lipid modification. Positions 193–195 (SIL) are cleaved as a propeptide — removed in mature form.

Belongs to the small GTPase superfamily. Rho family. Interacts with pakB.

The protein localises to the cell membrane. The polypeptide is Rho-related protein racB (racB) (Dictyostelium discoideum (Social amoeba)).